Here is a 754-residue protein sequence, read N- to C-terminus: MLGAMLHTLLLLLLAELGALLASGPESQSSFLEIIFPEKIEDKTHSEEQISYIIPINKKQYTVHLQKRYFLTNRFMVYMYNQGSTSFHSPNIPAQCYYQGHIKGYPNSVATLSTCSGLRGFLQFENVSYGIEPLQSAFTSQHIVYKLGNKEKELIFNKNSRNIEMPTNYGILINKKPKSPFKNLFPLYLEMSIVVDKALYDYLGSDSNIVTNKIIEIISLINSVFAQLKVTIVLSSLELWSDKNKIPTVGEADELLHKFLEWKQAYLTLRPHDVAYLFIYNEYPNYMGATYPGKMCTAHYSAGITMYPKDMTLEAFSVILTQMLGLSLGISYDEPEKCYCSESICIMNPRAMQYGGVKSFSNCSLNDFEHFKSNEGAKCLQNKPQMQRTAAAVCGNGKVEGDEICDCGSEAECGPDSCCEPNRCVLKAGRACDSKSPSSTCCKNCQFLPEKHQCRPEKHLYCDIPEVCNGSSGNCPPDVTINNGHVCKESGTICYNGDCPDLDRVCESIYGAGSVNAPFACYEEIQGQNDRFGNCGKDNRNRYVFCGWRNLICGRLICTYPTRMPYNPPNNSTASVIYAFVRDKVCITVDFGSSVKEDPLRVANGATCDLDRICLNGVCVESRFLRDQSKTCSSKCHGNGVCNSHGVCHCNAGYSPPNCQYPTTKRSASLWSGKHDLPMERASKNQEKKWLLSLYIVLIILASVFLIGTGWKGLKQCGSKEEESMSSESKSEDSTYTYVSRSTSETSSMTSTSS.

A signal peptide spans 1 to 22; the sequence is MLGAMLHTLLLLLLAELGALLA. Ser-23 carries the phosphoserine modification. The propeptide occupies 23–176; the sequence is SGPESQSSFL…TNYGILINKK (154 aa). An N-linked (GlcNAc...) asparagine glycan is attached at Asn-126. Residues 177-689 are Extracellular-facing; it reads PKSPFKNLFP…ERASKNQEKK (513 aa). A Peptidase M12B domain is found at 187–384; that stretch reads LYLEMSIVVD…EGAKCLQNKP (198 aa). Cystine bridges form between Cys-296-Cys-379, Cys-338-Cys-363, Cys-340-Cys-345, and Cys-454-Cys-475. Residues Asn-362, Asn-469, Asn-570, and Asn-571 are each glycosylated (N-linked (GlcNAc...) asparagine). The 93-residue stretch at 391–483 folds into the Disintegrin domain; the sequence is AAVCGNGKVE…NCPPDVTINN (93 aa). Residues 628–660 enclose the EGF-like domain; it reads QSKTCSSKCHGNGVCNSHGVCHCNAGYSPPNCQ. Intrachain disulfides connect Cys-632/Cys-642, Cys-636/Cys-648, and Cys-650/Cys-659. The helical transmembrane segment at 690 to 710 threads the bilayer; that stretch reads WLLSLYIVLIILASVFLIGTG. Over 711–754 the chain is Cytoplasmic; it reads WKGLKQCGSKEEESMSSESKSEDSTYTYVSRSTSETSSMTSTSS. Residues 720 to 733 are compositionally biased toward basic and acidic residues; sequence KEEESMSSESKSED. Residues 720–754 form a disordered region; it reads KEEESMSSESKSEDSTYTYVSRSTSETSSMTSTSS. Residues 734-754 show a composition bias toward low complexity; the sequence is STYTYVSRSTSETSSMTSTSS.

Expressed in sperm (at protein level). Highly expressed in the testis and weakly expressed in the epididymis, brain and heart.

It localises to the membrane. May play a role in sperm development and fertilization This is a non-catalytic metalloprotease-like protein. The sequence is that of Disintegrin and metalloproteinase domain-containing protein 32 from Mus musculus (Mouse).